The chain runs to 447 residues: 3-phosphoshikimate 1-carboxyvinyltransferase (447 aa).

The 3-phosphoshikimate site is built by K25, S26, and R30. K25 is a phosphoenolpyruvate binding site. Phosphoenolpyruvate contacts are provided by G96 and R124. Residues S171, S172, Q173, S203, D325, and K352 each contribute to the 3-phosphoshikimate site. Phosphoenolpyruvate is bound at residue Q173. Residue D325 is the Proton acceptor of the active site. Phosphoenolpyruvate contacts are provided by R356, R400, and K425.

This sequence belongs to the EPSP synthase family. In terms of assembly, monomer.

The protein resides in the cytoplasm. It carries out the reaction 3-phosphoshikimate + phosphoenolpyruvate = 5-O-(1-carboxyvinyl)-3-phosphoshikimate + phosphate. Its pathway is metabolic intermediate biosynthesis; chorismate biosynthesis; chorismate from D-erythrose 4-phosphate and phosphoenolpyruvate: step 6/7. Functionally, catalyzes the transfer of the enolpyruvyl moiety of phosphoenolpyruvate (PEP) to the 5-hydroxyl of shikimate-3-phosphate (S3P) to produce enolpyruvyl shikimate-3-phosphate and inorganic phosphate. The chain is 3-phosphoshikimate 1-carboxyvinyltransferase from Bordetella petrii (strain ATCC BAA-461 / DSM 12804 / CCUG 43448).